The primary structure comprises 435 residues: uncharacterized protein (435 aa).

Helical transmembrane passes span 40–60 (LVST…EAVF), 103–123 (VLWT…WLIL), 133–153 (IMLA…IYNP), 195–215 (LIHE…IIVL), 226–246 (ICTA…AVVG), 313–333 (VAVV…LFFV), 358–378 (LALP…AVDW), 381–401 (WWVM…IDRP), and 414–434 (VFVC…NNIG).

The protein localises to the cell membrane. This is an uncharacterized protein from Mycobacterium bovis (strain ATCC BAA-935 / AF2122/97).